The chain runs to 741 residues: Protein lin-54 homolog (741 aa).

Residues 513-626 (PRKPCNCTKS…KCIGCKNFEE (114 aa)) enclose the CRC domain. A DNA-binding region spans residues 515–528 (KPCNCTKSLCLKLY). Residues cysteine 517, cysteine 519, cysteine 524, cysteine 529, cysteine 531, cysteine 538, cysteine 541, cysteine 543, and cysteine 546 each contribute to the Zn(2+) site. The tract at residues 575–588 (IGKGKEGESDRRHS) is linker. Residues cysteine 591, cysteine 593, cysteine 598, cysteine 603, cysteine 605, cysteine 612, cysteine 616, cysteine 618, and cysteine 621 each coordinate Zn(2+). The interval 591-604 (CNCKRSGCLKNYCE) is DNA-binding.

It belongs to the lin-54 family. As to quaternary structure, component of the DREAM complex.

It localises to the nucleus. Its function is as follows. Component of the DREAM complex, a multiprotein complex that can both act as a transcription activator or repressor depending on the context. Specifically recognizes the consensus motif 5'-TTYRAA-3' in target DNA. This Xenopus tropicalis (Western clawed frog) protein is Protein lin-54 homolog (lin54).